A 500-amino-acid polypeptide reads, in one-letter code: Trans-cinnamate 4-monooxygenase (500 aa).

A helical transmembrane segment spans residues alanine 3–valine 23. (E)-cinnamate-binding positions include arginine 213–glutamine 218 and alanine 302. Cysteine 442 is a heme binding site.

It belongs to the cytochrome P450 family. It depends on heme as a cofactor. As to expression, expressed in roots and leaves.

The protein resides in the membrane. The catalysed reaction is (E)-cinnamate + reduced [NADPH--hemoprotein reductase] + O2 = (E)-4-coumarate + oxidized [NADPH--hemoprotein reductase] + H2O + H(+). It participates in phenylpropanoid metabolism; trans-4-coumarate biosynthesis; trans-4-coumarate from trans-cinnamate: step 1/1. In terms of biological role, catalyzes the first oxidative step of the phenylpropanoid pathway in higher plants by transforming trans-cinnamate into p-coumarate. The compounds formed by this pathway are essential components for lignification, pollination, and defense against ultraviolet light, predators and pathogens. This is Trans-cinnamate 4-monooxygenase from Oryza sativa subsp. japonica (Rice).